We begin with the raw amino-acid sequence, 575 residues long: Urease subunit alpha (575 aa).

The region spanning 137 to 575 (GGIDCHIHFI…LPMTQRYFLF (439 aa)) is the Urease domain. Residues His142, His144, and Lys225 each coordinate Ni(2+). Residue Lys225 is modified to N6-carboxylysine. His227 contacts substrate. His254 and His280 together coordinate Ni(2+). His328 functions as the Proton donor in the catalytic mechanism. Residue Asp368 participates in Ni(2+) binding.

It belongs to the metallo-dependent hydrolases superfamily. Urease alpha subunit family. Heterotrimer of UreA (gamma), UreB (beta) and UreC (alpha) subunits. Three heterotrimers associate to form the active enzyme. Ni cation serves as cofactor. Post-translationally, carboxylation allows a single lysine to coordinate two nickel ions.

The protein resides in the cytoplasm. The enzyme catalyses urea + 2 H2O + H(+) = hydrogencarbonate + 2 NH4(+). It functions in the pathway nitrogen metabolism; urea degradation; CO(2) and NH(3) from urea (urease route): step 1/1. The sequence is that of Urease subunit alpha from Methylibium petroleiphilum (strain ATCC BAA-1232 / LMG 22953 / PM1).